We begin with the raw amino-acid sequence, 208 residues long: Uracil phosphoribosyltransferase (208 aa).

Residues Arg-78, Arg-103, and 130-138 (DPMLATGGS) each bind 5-phospho-alpha-D-ribose 1-diphosphate. Uracil contacts are provided by residues Ile-193 and 198–200 (GDA). Asp-199 is a binding site for 5-phospho-alpha-D-ribose 1-diphosphate.

It belongs to the UPRTase family. Mg(2+) serves as cofactor.

The enzyme catalyses UMP + diphosphate = 5-phospho-alpha-D-ribose 1-diphosphate + uracil. Its pathway is pyrimidine metabolism; UMP biosynthesis via salvage pathway; UMP from uracil: step 1/1. With respect to regulation, allosterically activated by GTP. In terms of biological role, catalyzes the conversion of uracil and 5-phospho-alpha-D-ribose 1-diphosphate (PRPP) to UMP and diphosphate. The chain is Uracil phosphoribosyltransferase from Shewanella sp. (strain ANA-3).